Consider the following 145-residue polypeptide: Protein FimA (145 aa).

Belongs to the fimbrial protein family.

It is found in the fimbrium. This is Protein FimA (fimA) from Bordetella pertussis.